We begin with the raw amino-acid sequence, 387 residues long: 1-deoxy-D-xylulose 5-phosphate reductoisomerase (387 aa).

The NADPH site is built by threonine 11, glycine 12, serine 13, isoleucine 14, glycine 37, arginine 38, glutamine 39, and asparagine 127. Residue lysine 128 coordinates 1-deoxy-D-xylulose 5-phosphate. Glutamate 129 contributes to the NADPH binding site. Aspartate 153 serves as a coordination point for Mn(2+). 1-deoxy-D-xylulose 5-phosphate-binding residues include serine 154, glutamate 155, serine 179, and histidine 200. Residue glutamate 155 coordinates Mn(2+). Residue glycine 206 coordinates NADPH. Serine 213, asparagine 218, lysine 219, and glutamate 222 together coordinate 1-deoxy-D-xylulose 5-phosphate. Residue glutamate 222 coordinates Mn(2+).

The protein belongs to the DXR family. It depends on Mg(2+) as a cofactor. The cofactor is Mn(2+).

The enzyme catalyses 2-C-methyl-D-erythritol 4-phosphate + NADP(+) = 1-deoxy-D-xylulose 5-phosphate + NADPH + H(+). It participates in isoprenoid biosynthesis; isopentenyl diphosphate biosynthesis via DXP pathway; isopentenyl diphosphate from 1-deoxy-D-xylulose 5-phosphate: step 1/6. In terms of biological role, catalyzes the NADPH-dependent rearrangement and reduction of 1-deoxy-D-xylulose-5-phosphate (DXP) to 2-C-methyl-D-erythritol 4-phosphate (MEP). In Symbiobacterium thermophilum (strain DSM 24528 / JCM 14929 / IAM 14863 / T), this protein is 1-deoxy-D-xylulose 5-phosphate reductoisomerase.